The sequence spans 165 residues: Probable chemoreceptor glutamine deamidase CheD (165 aa).

This sequence belongs to the CheD family.

The catalysed reaction is L-glutaminyl-[protein] + H2O = L-glutamyl-[protein] + NH4(+). Probably deamidates glutamine residues to glutamate on methyl-accepting chemotaxis receptors (MCPs), playing an important role in chemotaxis. The polypeptide is Probable chemoreceptor glutamine deamidase CheD (Symbiobacterium thermophilum (strain DSM 24528 / JCM 14929 / IAM 14863 / T)).